A 31-amino-acid chain; its full sequence is Cytolysin Oshem 2 (31 aa).

Its subcellular location is the secreted. It localises to the nematocyst. It is found in the target cell membrane. Its function is as follows. Cytolysin that shows weak hemolysis and weak myonecrosis. The protein is Cytolysin Oshem 2 of Olindias sambaquiensis (Hydromedusa).